A 77-amino-acid chain; its full sequence is Translation initiation factor IF-1, chloroplastic (77 aa).

Residues methionine 1 to arginine 71 form the S1-like domain.

It belongs to the IF-1 family. As to quaternary structure, component of the 30S ribosomal translation pre-initiation complex which assembles on the 30S ribosome in the order IF-2 and IF-3, IF-1 and N-formylmethionyl-tRNA(fMet); mRNA recruitment can occur at any time during PIC assembly.

Its subcellular location is the plastid. It localises to the chloroplast. Functionally, one of the essential components for the initiation of protein synthesis. Stabilizes the binding of IF-2 and IF-3 on the 30S subunit to which N-formylmethionyl-tRNA(fMet) subsequently binds. Helps modulate mRNA selection, yielding the 30S pre-initiation complex (PIC). Upon addition of the 50S ribosomal subunit IF-1, IF-2 and IF-3 are released leaving the mature 70S translation initiation complex. The chain is Translation initiation factor IF-1, chloroplastic from Nandina domestica (Heavenly bamboo).